We begin with the raw amino-acid sequence, 376 residues long: 1-deoxy-D-xylulose 5-phosphate reductoisomerase (376 aa).

The NADPH site is built by threonine 12, glycine 13, serine 14, isoleucine 15, asparagine 39, and asparagine 116. Lysine 117 contacts 1-deoxy-D-xylulose 5-phosphate. Residue glutamate 118 coordinates NADPH. Mn(2+) is bound at residue aspartate 142. Positions 143, 144, 164, and 187 each coordinate 1-deoxy-D-xylulose 5-phosphate. Position 144 (glutamate 144) interacts with Mn(2+). Residue glycine 193 participates in NADPH binding. Serine 200, asparagine 205, lysine 206, and glutamate 209 together coordinate 1-deoxy-D-xylulose 5-phosphate. Glutamate 209 contributes to the Mn(2+) binding site.

The protein belongs to the DXR family. The cofactor is Mg(2+). Mn(2+) is required as a cofactor.

It carries out the reaction 2-C-methyl-D-erythritol 4-phosphate + NADP(+) = 1-deoxy-D-xylulose 5-phosphate + NADPH + H(+). It participates in isoprenoid biosynthesis; isopentenyl diphosphate biosynthesis via DXP pathway; isopentenyl diphosphate from 1-deoxy-D-xylulose 5-phosphate: step 1/6. Its function is as follows. Catalyzes the NADPH-dependent rearrangement and reduction of 1-deoxy-D-xylulose-5-phosphate (DXP) to 2-C-methyl-D-erythritol 4-phosphate (MEP). The sequence is that of 1-deoxy-D-xylulose 5-phosphate reductoisomerase from Thermotoga maritima (strain ATCC 43589 / DSM 3109 / JCM 10099 / NBRC 100826 / MSB8).